The sequence spans 586 residues: Potassium-transporting ATPase potassium-binding subunit (586 aa).

12 helical membrane-spanning segments follow: residues 11–31 (LFLVLLLAVVKPMGAFMAKVF), 67–87 (AVAVLLFNLALFVSLFAILML), 136–156 (GLAVHNFVSAATGIAVAIAVI), 179–199 (LYVLLPISLIGALILVSQGVI), 279–299 (VEIFLILLIPFALTSTFGVMV), 306–326 (WAILGVMLLMMAISFAVLQGV), 351–371 (FGLAGASLFTVATTGTSCGAV), 381–401 (LGGMIPLGLILLGEIAPGGVG), 403–423 (GLYTMLAFVVIAVFVAGLMIG), 442–462 (IITVLAAGVVVLILSGVAMIT), 507–527 (ILGSLAMLVGRFAPAVAVLAM), and 551–571 (FALWLMLVILIVGALTFFPAL).

It belongs to the KdpA family. As to quaternary structure, the system is composed of three essential subunits: KdpA, KdpB and KdpC.

The protein localises to the cell inner membrane. Part of the high-affinity ATP-driven potassium transport (or Kdp) system, which catalyzes the hydrolysis of ATP coupled with the electrogenic transport of potassium into the cytoplasm. This subunit binds the periplasmic potassium ions and delivers the ions to the membrane domain of KdpB through an intramembrane tunnel. The protein is Potassium-transporting ATPase potassium-binding subunit of Geobacter metallireducens (strain ATCC 53774 / DSM 7210 / GS-15).